The sequence spans 564 residues: Proline--tRNA ligase (564 aa).

Belongs to the class-II aminoacyl-tRNA synthetase family. ProS type 1 subfamily. Homodimer.

It is found in the cytoplasm. It catalyses the reaction tRNA(Pro) + L-proline + ATP = L-prolyl-tRNA(Pro) + AMP + diphosphate. Its function is as follows. Catalyzes the attachment of proline to tRNA(Pro) in a two-step reaction: proline is first activated by ATP to form Pro-AMP and then transferred to the acceptor end of tRNA(Pro). As ProRS can inadvertently accommodate and process non-cognate amino acids such as alanine and cysteine, to avoid such errors it has two additional distinct editing activities against alanine. One activity is designated as 'pretransfer' editing and involves the tRNA(Pro)-independent hydrolysis of activated Ala-AMP. The other activity is designated 'posttransfer' editing and involves deacylation of mischarged Ala-tRNA(Pro). The misacylated Cys-tRNA(Pro) is not edited by ProRS. This Xylella fastidiosa (strain 9a5c) protein is Proline--tRNA ligase.